A 494-amino-acid polypeptide reads, in one-letter code: Sphingosine-1-phosphate transporter MFSD2B (494 aa).

The span at 1–12 (MSVPHGPTPAPV) shows a compositional bias: pro residues. The disordered stretch occupies residues 1-26 (MSVPHGPTPAPVAEPHTQEPGSDKRD). The next 10 membrane-spanning stretches (helical) occupy residues 103 to 123 (LMPW…FLWF), 140 to 160 (CLFQ…TMIL), 179 to 199 (MAGT…AHGS), 223 to 243 (IAAA…CLGV), 277 to 297 (VVSF…LVLF), 310 to 330 (NLVL…EWVL), 339 to 359 (AFGI…PSAP), 360 to 380 (VAYV…LLPW), 402 to 422 (TIFY…ALGI), and 449 to 469 (VLIG…LLVG). A disordered region spans residues 473–494 (KMPRQDTSSQLSLRRRTSYSLA). Residues 485 to 494 (LRRRTSYSLA) are compositionally biased toward basic residues.

The protein belongs to the major facilitator superfamily. Widely expressed with highest expression in spleen, lung and testis. Predominantly expressed in erythroid lineages giving rise to erythrocytes and platelets, but absent in lymphoid lineages.

Its subcellular location is the cell membrane. It catalyses the reaction sphing-4-enine 1-phosphate(in) = sphing-4-enine 1-phosphate(out). The enzyme catalyses sphinganine 1-phosphate(in) = sphinganine 1-phosphate(out). It carries out the reaction sphinga-4E,14Z-dienine-1-phosphate(in) = sphinga-4E,14Z-dienine-1-phosphate(out). Functionally, lipid transporter that specifically mediates export of sphingosine-1-phosphate in red blood cells and platelets. Sphingosine-1-phosphate is a signaling sphingolipid and its export from red blood cells into in the plasma is required for red blood cell morphology. Sphingosine-1-phosphate export from platelets is required for platelet aggregation and thrombus formation. Mediates the export of different sphingosine-1-phosphate (S1P) species, including S1P(d18:0) (sphinganine 1-phosphate), S1P (d18:1) (sphing-4-enine 1-phosphate) and S1P (d18:2) (sphinga-4E,14Z-dienine-1-phosphate). Release of sphingosine-1-phosphate is facilitated by a proton gradient. In contrast, cations, such as sodium, are not required to drive sphingosine-1-phosphate transport. In addition to export, also able to mediate S1P import. Does not transport lysophosphatidylcholine (LPC). The sequence is that of Sphingosine-1-phosphate transporter MFSD2B from Mus musculus (Mouse).